Consider the following 1415-residue polypeptide: Uveal autoantigen with coiled-coil domains and ankyrin repeats (1415 aa).

ANK repeat units follow at residues 69-98 (EGRS…DITT), 102-131 (AGRN…PTEH), 135-164 (QGRT…SVNA), 168-197 (DGRT…EINS), and 201-230 (QNRT…DVSL). Residues 288–376 (VKSSQREHRN…TIESLKNRFK (89 aa)) are a coiled coil. The stretch at 617 to 646 (ELLAKLTLSVPTEKFESMKSLLSSEVNEKV) is one ANK 6 repeat. Positions 759–1381 (TVEELKKQLL…TDRQHQEVIA (623 aa)) form a coiled coil. Residue lysine 1034 forms a Glycyl lysine isopeptide (Lys-Gly) (interchain with G-Cter in SUMO2) linkage. Residues 1186-1201 (LREKEEESQNKTEEVS) show a composition bias toward basic and acidic residues. Positions 1186–1205 (LREKEEESQNKTEEVSKLQS) are disordered.

As to quaternary structure, component of the apoptosome complex, composed of APAF1, pro-caspase-9 and UACA. In the complex, it probably interacts directly with APAF1. Interacts with LGALS3, ARF6 and ACTB. Interacts with RAB39A. As to expression, highly expressed in adrenal, testis, kidney and large intestine.

The protein resides in the nucleus. Its subcellular location is the cytoplasm. The protein localises to the cytoskeleton. Its function is as follows. Regulates APAF1 expression and plays an important role in the regulation of stress-induced apoptosis. Promotes apoptosis by regulating three pathways, apoptosome up-regulation, LGALS3/galectin-3 down-regulation and NF-kappa-B inactivation. Regulates the redistribution of APAF1 into the nucleus after proapoptotic stress. Down-regulates the expression of LGALS3 by inhibiting NFKB1. Modulates isoactin dynamics to regulate the morphological alterations required for cell growth and motility. Interaction with ARF6 may modulate cell shape and motility after injury. May be involved in multiple neurite formation. This is Uveal autoantigen with coiled-coil domains and ankyrin repeats (UACA) from Canis lupus familiaris (Dog).